We begin with the raw amino-acid sequence, 379 residues long: cAMP-dependent protein kinase type I-alpha regulatory subunit (379 aa).

Residue Met-1 is modified to N-acetylmethionine. The interval 1 to 134 (MASSSTSSEE…ALAKAIEKNV (134 aa)) is dimerization and phosphorylation. Residues 63–93 (QMVSQQKSSSRSDSREDEVSPPMNPVVKGRR) form a disordered region. The Pseudophosphorylation motif motif lies at 94 to 98 (RRGAI). 3',5'-cyclic AMP contacts are provided by residues 135-252 (LFAH…SKVS), Glu-200, Arg-209, 253-379 (ILES…SLSV), Glu-324, and Arg-333.

This sequence belongs to the cAMP-dependent kinase regulatory chain family. The inactive holoenzyme is composed of two regulatory chains and two catalytic chains. Activation by cAMP releases the two active catalytic monomers and the regulatory dimer. Interacts with PRKACA and PRKACB. Interacts with PRRC1; resulting in PKA activation. In terms of processing, the pseudophosphorylation site binds to the substrate-binding region of the catalytic chain, resulting in the inhibition of its activity.

Its subcellular location is the cell membrane. Its function is as follows. Regulatory subunit of the cAMP-dependent protein kinases involved in cAMP signaling in cells. In Danio rerio (Zebrafish), this protein is cAMP-dependent protein kinase type I-alpha regulatory subunit (prkar1aa).